The following is a 449-amino-acid chain: Streptomycin-6-phosphate phosphatase (449 aa).

An N-terminal signal peptide occupies residues 1-32; sequence MRFAYGRLPWRRGAVLGSALLVLVTAPAASTA. A Mg(2+)-binding site is contributed by Asp50. Asp50 provides a ligand contact to Zn(2+). Ser99 acts as the Phosphoserine intermediate in catalysis. Asp151 and Thr153 together coordinate Mg(2+). The disordered stretch occupies residues 268–290; it reads APGGTAPQRCATRNPGRPAGTPD. Glu321 provides a ligand contact to Mg(2+). 5 residues coordinate Zn(2+): Asp326, His330, Asp368, His369, and His412.

It belongs to the alkaline phosphatase family. Mg(2+) serves as cofactor. Zn(2+) is required as a cofactor.

Its subcellular location is the secreted. It carries out the reaction streptomycin 6-phosphate + H2O = streptomycin + phosphate. It participates in antibiotic biosynthesis; streptomycin biosynthesis. Its function is as follows. Specifically cleaves both streptomycin-6-phosphate and, more slowly, streptomycin-3''-phosphate during the biosynthesis of streptomycin. This is Streptomycin-6-phosphate phosphatase (strK) from Streptomyces griseus.